Consider the following 247-residue polypeptide: tRNA (guanine-N(1)-)-methyltransferase (247 aa).

S-adenosyl-L-methionine-binding positions include Gly115 and 134 to 139 (IGDFVL).

The protein belongs to the RNA methyltransferase TrmD family. Homodimer.

It is found in the cytoplasm. It carries out the reaction guanosine(37) in tRNA + S-adenosyl-L-methionine = N(1)-methylguanosine(37) in tRNA + S-adenosyl-L-homocysteine + H(+). In terms of biological role, specifically methylates guanosine-37 in various tRNAs. The sequence is that of tRNA (guanine-N(1)-)-methyltransferase from Anaeromyxobacter sp. (strain K).